The primary structure comprises 794 residues: Mitochondrial intermediate peptidase (794 aa).

The N-terminal 39 residues, 1 to 39 (MRVTSSRLLQGGSLVSRVLKRRLNNASRTKKGWFSTRTL), are a transit peptide targeting the mitochondrion. Histidine 581 lines the Zn(2+) pocket. Glutamate 582 is an active-site residue. Histidine 585 and histidine 588 together coordinate Zn(2+).

The protein belongs to the peptidase M3 family. The cofactor is Zn(2+).

It localises to the mitochondrion matrix. The catalysed reaction is Release of an N-terminal octapeptide as second stage of processing of some proteins imported into the mitochondrion.. Functionally, cleaves proteins, imported into the mitochondrion, to their mature size. While most mitochondrial precursor proteins are processed to the mature form in one step by mitochondrial processing peptidase (MPP), the sequential cleavage by MIP of an octapeptide after initial processing by MPP is a required step for a subgroup of nuclear-encoded precursor proteins destined for the matrix or the inner membrane. This Debaryomyces hansenii (strain ATCC 36239 / CBS 767 / BCRC 21394 / JCM 1990 / NBRC 0083 / IGC 2968) (Yeast) protein is Mitochondrial intermediate peptidase (OCT1).